A 159-amino-acid chain; its full sequence is Peptide deformylase (159 aa).

Cys88 and His130 together coordinate Fe cation. Residue Glu131 is part of the active site. His134 contributes to the Fe cation binding site.

Belongs to the polypeptide deformylase family. The cofactor is Fe(2+).

The enzyme catalyses N-terminal N-formyl-L-methionyl-[peptide] + H2O = N-terminal L-methionyl-[peptide] + formate. Its function is as follows. Removes the formyl group from the N-terminal Met of newly synthesized proteins. Requires at least a dipeptide for an efficient rate of reaction. N-terminal L-methionine is a prerequisite for activity but the enzyme has broad specificity at other positions. The polypeptide is Peptide deformylase (Caldanaerobacter subterraneus subsp. tengcongensis (strain DSM 15242 / JCM 11007 / NBRC 100824 / MB4) (Thermoanaerobacter tengcongensis)).